Reading from the N-terminus, the 416-residue chain is Phosphoglycerate kinase (416 aa).

Residues 24-26 (DLN), Arg-40, 63-66 (HLGR), Arg-122, and Arg-162 each bind substrate. Residues Lys-212, Gly-300, Glu-331, and 360–363 (GGDS) each bind ATP.

The protein belongs to the phosphoglycerate kinase family. Monomer.

The protein resides in the cytoplasm. The catalysed reaction is (2R)-3-phosphoglycerate + ATP = (2R)-3-phospho-glyceroyl phosphate + ADP. It participates in carbohydrate degradation; glycolysis; pyruvate from D-glyceraldehyde 3-phosphate: step 2/5. This chain is Phosphoglycerate kinase, found in Mycobacterium ulcerans (strain Agy99).